The primary structure comprises 84 residues: uncharacterized protein (84 aa).

Residues 7-62 (IDVMLAKRKMSVTELSERVGITMANLSILKNGKAKAIRLSTLEAICKALECQPGDI) enclose the HTH cro/C1-type domain. Positions 18 to 37 (VTELSERVGITMANLSILKN) form a DNA-binding region, H-T-H motif.

This is an uncharacterized protein from Bacillus subtilis (strain 168).